Consider the following 200-residue polypeptide: dITP/XTP pyrophosphatase (200 aa).

Residue 8 to 13 (SQNSSK) participates in substrate binding. Mg(2+) is bound by residues Glu40 and Asp69. Catalysis depends on Asp69, which acts as the Proton acceptor. Substrate contacts are provided by residues Ser70, 154 to 157 (FGYD), Lys177, and 182 to 183 (HR).

Belongs to the HAM1 NTPase family. Homodimer. The cofactor is Mg(2+).

The catalysed reaction is XTP + H2O = XMP + diphosphate + H(+). The enzyme catalyses dITP + H2O = dIMP + diphosphate + H(+). It carries out the reaction ITP + H2O = IMP + diphosphate + H(+). In terms of biological role, pyrophosphatase that catalyzes the hydrolysis of nucleoside triphosphates to their monophosphate derivatives, with a high preference for the non-canonical purine nucleotides XTP (xanthosine triphosphate), dITP (deoxyinosine triphosphate) and ITP. Seems to function as a house-cleaning enzyme that removes non-canonical purine nucleotides from the nucleotide pool, thus preventing their incorporation into DNA/RNA and avoiding chromosomal lesions. The chain is dITP/XTP pyrophosphatase from Coxiella burnetii (strain RSA 493 / Nine Mile phase I).